The sequence spans 418 residues: Acyl-coenzyme A amino acid N-acyltransferase 2 (418 aa).

Residues Ser-234, Asp-327, and His-361 each act as charge relay system in the active site. The Microbody targeting signal signature appears at 416 to 418; that stretch reads GKL.

This sequence belongs to the C/M/P thioester hydrolase family.

It localises to the peroxisome. Functionally, acyltransferase which efficiently conjugates very long-chain and long-chain fatty acids to taurine. Shows no conjugation activity in the presence of glycine. This Rattus norvegicus (Rat) protein is Acyl-coenzyme A amino acid N-acyltransferase 2.